A 470-amino-acid polypeptide reads, in one-letter code: Argininosuccinate lyase (470 aa).

It belongs to the lyase 1 family. Argininosuccinate lyase subfamily.

It localises to the cytoplasm. It catalyses the reaction 2-(N(omega)-L-arginino)succinate = fumarate + L-arginine. It participates in amino-acid biosynthesis; L-arginine biosynthesis; L-arginine from L-ornithine and carbamoyl phosphate: step 3/3. In Bordetella avium (strain 197N), this protein is Argininosuccinate lyase.